Consider the following 827-residue polypeptide: N-terminal kinase-like protein (827 aa).

Positions 1 to 309 (MWFWSRDPAR…PEDFCRHKIL (309 aa)) constitute a Protein kinase domain. HEAT repeat units lie at residues 345–383 (IIPV…VNAQ), 384–422 (IFPH…LNME), and 502–540 (VLPV…EDPS). The span at 586–624 (DAAASEGASAPSTASEASKPDTAPSSSAPPAAASTAPTS) shows a compositional bias: low complexity. Residues 586–827 (DAAASEGASA…PLKLGVRKLD (242 aa)) form a disordered region. A compositionally biased stretch (basic and acidic residues) spans 630–640 (EKGAPDNSLDR). Residues 641–652 (WDDEDWGSLEDA) are compositionally biased toward acidic residues. Basic and acidic residues predominate over residues 667 to 678 (DWGHGKTQEKTV). 2 stretches are compositionally biased toward polar residues: residues 679–690 (DFSSSRSKTKQV) and 737–746 (NWDTSGSSGR). Over residues 774–783 (GGDDNWESVE) the composition is skewed to acidic residues. A coiled-coil region spans residues 788–817 (LSKAEMARKKREERQKEIEAKRAERRAAKG). Positions 792 to 814 (EMARKKREERQKEIEAKRAERRA) are enriched in basic and acidic residues.

Belongs to the protein kinase superfamily.

Functionally, regulates COPI-mediated retrograde protein traffic at the interface between the Golgi apparatus and the endoplasmic reticulum. Involved in the maintenance of the Golgi apparatus morphology. The polypeptide is N-terminal kinase-like protein (scyl1) (Xenopus tropicalis (Western clawed frog)).